A 157-amino-acid chain; its full sequence is SsrA-binding protein (157 aa).

The disordered stretch occupies residues 133 to 157 (LHDKRETAKERDWQRDKARLMRDKG). The segment covering 135 to 157 (DKRETAKERDWQRDKARLMRDKG) has biased composition (basic and acidic residues).

The protein belongs to the SmpB family.

It is found in the cytoplasm. Its function is as follows. Required for rescue of stalled ribosomes mediated by trans-translation. Binds to transfer-messenger RNA (tmRNA), required for stable association of tmRNA with ribosomes. tmRNA and SmpB together mimic tRNA shape, replacing the anticodon stem-loop with SmpB. tmRNA is encoded by the ssrA gene; the 2 termini fold to resemble tRNA(Ala) and it encodes a 'tag peptide', a short internal open reading frame. During trans-translation Ala-aminoacylated tmRNA acts like a tRNA, entering the A-site of stalled ribosomes, displacing the stalled mRNA. The ribosome then switches to translate the ORF on the tmRNA; the nascent peptide is terminated with the 'tag peptide' encoded by the tmRNA and targeted for degradation. The ribosome is freed to recommence translation, which seems to be the essential function of trans-translation. This is SsrA-binding protein from Methylobacterium sp. (strain 4-46).